A 129-amino-acid chain; its full sequence is M-zodatoxin-Lt8j (129 aa).

An N-terminal signal peptide occupies residues 1–20 (MKYFVVALALVAAFACIAES). Residues 21–60 (KPAESEHELAEVEEENELADLEDAVWLEHLADLSDLEEAR) constitute a propeptide that is removed on maturation.

The protein belongs to the cationic peptide 06 (cytoinsectotoxin) family. In terms of tissue distribution, expressed by the venom gland.

The protein localises to the secreted. Its function is as follows. Insecticidal, cytolytic and antimicrobial peptide. Forms voltage-dependent, ion-permeable channels in membranes. At high concentration causes cell membrane lysis. This is M-zodatoxin-Lt8j (cit 1-9) from Lachesana tarabaevi (Spider).